Here is a 194-residue protein sequence, read N- to C-terminus: Small ribosomal subunit protein uS7 (194 aa).

Belongs to the universal ribosomal protein uS7 family. Part of the 30S ribosomal subunit.

One of the primary rRNA binding proteins, it binds directly to 16S rRNA where it nucleates assembly of the head domain of the 30S subunit. Is located at the subunit interface close to the decoding center. This Methanocorpusculum labreanum (strain ATCC 43576 / DSM 4855 / Z) protein is Small ribosomal subunit protein uS7.